Here is a 485-residue protein sequence, read N- to C-terminus: Sulfate adenylyltransferase subunit 1 (485 aa).

The tr-type G domain occupies 17-232 (KDLLRLLTAG…LETVHIDNDH (216 aa)). The tract at residues 26–33 (GSVDDGKS) is G1. GTP is bound at residue 26 to 33 (GSVDDGKS). Residues 84–88 (GITID) form a G2 region. Residues 105–108 (DTPG) form a G3 region. GTP contacts are provided by residues 105-109 (DTPGH) and 160-163 (NKMD). Residues 160-163 (NKMD) form a G4 region. The segment at 197-199 (SAL) is G5.

Belongs to the TRAFAC class translation factor GTPase superfamily. Classic translation factor GTPase family. CysN/NodQ subfamily. In terms of assembly, heterodimer composed of CysD, the smaller subunit, and CysN.

It carries out the reaction sulfate + ATP + H(+) = adenosine 5'-phosphosulfate + diphosphate. It functions in the pathway sulfur metabolism; hydrogen sulfide biosynthesis; sulfite from sulfate: step 1/3. Its function is as follows. With CysD forms the ATP sulfurylase (ATPS) that catalyzes the adenylation of sulfate producing adenosine 5'-phosphosulfate (APS) and diphosphate, the first enzymatic step in sulfur assimilation pathway. APS synthesis involves the formation of a high-energy phosphoric-sulfuric acid anhydride bond driven by GTP hydrolysis by CysN coupled to ATP hydrolysis by CysD. This is Sulfate adenylyltransferase subunit 1 from Bacteroides thetaiotaomicron (strain ATCC 29148 / DSM 2079 / JCM 5827 / CCUG 10774 / NCTC 10582 / VPI-5482 / E50).